Consider the following 428-residue polypeptide: Putative F-box protein At3g22421 (428 aa).

The 47-residue stretch at 4–50 (TTTISHLPTELLDEIISRVPLKSTRAVRLTCKNWDSLFKNRSFMKEE) folds into the F-box domain.

The sequence is that of Putative F-box protein At3g22421 from Arabidopsis thaliana (Mouse-ear cress).